The primary structure comprises 202 residues: NADH-quinone oxidoreductase subunit C (202 aa).

Belongs to the complex I 30 kDa subunit family. As to quaternary structure, NDH-1 is composed of 14 different subunits. Subunits NuoB, C, D, E, F, and G constitute the peripheral sector of the complex.

The protein resides in the cell inner membrane. The catalysed reaction is a quinone + NADH + 5 H(+)(in) = a quinol + NAD(+) + 4 H(+)(out). In terms of biological role, NDH-1 shuttles electrons from NADH, via FMN and iron-sulfur (Fe-S) centers, to quinones in the respiratory chain. The immediate electron acceptor for the enzyme in this species is believed to be ubiquinone. Couples the redox reaction to proton translocation (for every two electrons transferred, four hydrogen ions are translocated across the cytoplasmic membrane), and thus conserves the redox energy in a proton gradient. The polypeptide is NADH-quinone oxidoreductase subunit C (Albidiferax ferrireducens (strain ATCC BAA-621 / DSM 15236 / T118) (Rhodoferax ferrireducens)).